Reading from the N-terminus, the 139-residue chain is MAVKIKLKRLGKIRSPHYRIVVADSRTRRDGRAIEEIGKYHPTYNPSVMEVDAERVAYWLGVGAQPTEPVLAILKKTGDWQKFKGEPAPAPLLQPAEKAARPSFEAIGGEDEGKGEAITQKKKADKRDEAAAESSASEA.

The interval 84–139 is disordered; that stretch reads KGEPAPAPLLQPAEKAARPSFEAIGGEDEGKGEAITQKKKADKRDEAAAESSASEA.

The protein belongs to the bacterial ribosomal protein bS16 family.

This is Small ribosomal subunit protein bS16 from Streptomyces lividans.